A 79-amino-acid chain; its full sequence is Cytochrome c oxidase assembly factor 6 homolog (79 aa).

The region spanning 9 to 52 (RQACWGARDLYWRCLDDNAEDAARCQKLRSSFEASCPQQWIKYF) is the CHCH domain. The Cx9C motif motif lies at 12-22 (CWGARDLYWRC). 2 disulfides stabilise this stretch: Cys-12-Cys-44 and Cys-22-Cys-33. The Cx10C motif signature appears at 33-44 (CQKLRSSFEASC).

It belongs to the cytochrome c oxidase subunit 6B family. As to quaternary structure, found in a complex with TMEM177, COX20, MT-CO2/COX2, COX18, SCO1 and SCO2. Interacts with COA1, MT-CO2/COX2, SCO1, SCO2 and COX20. Interacts with COX20 in a MT-CO2/COX2- and COX18-dependent manner. Interacts with COX16.

It is found in the mitochondrion. The protein localises to the mitochondrion intermembrane space. In terms of biological role, involved in the maturation of the mitochondrial respiratory chain complex IV subunit MT-CO2/COX2. Thereby, may regulate early steps of complex IV assembly. Mitochondrial respiratory chain complex IV or cytochrome c oxidase is the component of the respiratory chain that catalyzes the transfer of electrons from intermembrane space cytochrome c to molecular oxygen in the matrix and as a consequence contributes to the proton gradient involved in mitochondrial ATP synthesis. May also be required for efficient formation of respiratory supercomplexes comprised of complexes III and IV. This is Cytochrome c oxidase assembly factor 6 homolog (Coa6) from Mus musculus (Mouse).